The primary structure comprises 492 residues: Probable cytochrome P450 516B1 (492 aa).

A helical membrane pass occupies residues Met-1 to His-17. Cys-438 contacts heme.

This sequence belongs to the cytochrome P450 family. Requires heme as cofactor.

Its subcellular location is the membrane. This Dictyostelium discoideum (Social amoeba) protein is Probable cytochrome P450 516B1 (cyp516B1).